The following is a 449-amino-acid chain: Tubulin alpha-2 chain (449 aa).

Residues Q11, E71, S140, G144, T145, T179, N206, and N228 each contribute to the GTP site. Mg(2+) is bound at residue E71. Residue E254 is part of the active site.

Belongs to the tubulin family. As to quaternary structure, dimer of alpha and beta chains. A typical microtubule is a hollow water-filled tube with an outer diameter of 25 nm and an inner diameter of 15 nM. Alpha-beta heterodimers associate head-to-tail to form protofilaments running lengthwise along the microtubule wall with the beta-tubulin subunit facing the microtubule plus end conferring a structural polarity. Microtubules usually have 13 protofilaments but different protofilament numbers can be found in some organisms and specialized cells. It depends on Mg(2+) as a cofactor.

The protein resides in the cytoplasm. It is found in the cytoskeleton. It catalyses the reaction GTP + H2O = GDP + phosphate + H(+). Tubulin is the major constituent of microtubules, a cylinder consisting of laterally associated linear protofilaments composed of alpha- and beta-tubulin heterodimers. Microtubules grow by the addition of GTP-tubulin dimers to the microtubule end, where a stabilizing cap forms. Below the cap, tubulin dimers are in GDP-bound state, owing to GTPase activity of alpha-tubulin. This is Tubulin alpha-2 chain (tub1) from Schizosaccharomyces pombe (strain 972 / ATCC 24843) (Fission yeast).